The following is a 75-amino-acid chain: Small ribosomal subunit protein bS18 (75 aa).

This sequence belongs to the bacterial ribosomal protein bS18 family. As to quaternary structure, part of the 30S ribosomal subunit. Forms a tight heterodimer with protein bS6.

Functionally, binds as a heterodimer with protein bS6 to the central domain of the 16S rRNA, where it helps stabilize the platform of the 30S subunit. The polypeptide is Small ribosomal subunit protein bS18 (Pasteurella multocida (strain Pm70)).